Here is a 33-residue protein sequence, read N- to C-terminus: Photosystem II reaction center protein T (33 aa).

Residues 3–23 (ALVYTFLLVSTLGIIFFAIFF) traverse the membrane as a helical segment.

This sequence belongs to the PsbT family. As to quaternary structure, PSII is composed of 1 copy each of membrane proteins PsbA, PsbB, PsbC, PsbD, PsbE, PsbF, PsbH, PsbI, PsbJ, PsbK, PsbL, PsbM, PsbT, PsbY, PsbZ, Psb30/Ycf12, at least 3 peripheral proteins of the oxygen-evolving complex and a large number of cofactors. It forms dimeric complexes.

The protein localises to the plastid. It is found in the chloroplast thylakoid membrane. Functionally, found at the monomer-monomer interface of the photosystem II (PS II) dimer, plays a role in assembly and dimerization of PSII. PSII is a light-driven water plastoquinone oxidoreductase, using light energy to abstract electrons from H(2)O, generating a proton gradient subsequently used for ATP formation. The chain is Photosystem II reaction center protein T from Asparagus officinalis (Garden asparagus).